We begin with the raw amino-acid sequence, 387 residues long: MATTKSFLILIVMILATTSSTFASLEEMVTVLSIDGGGIKGIIPGTILEFLEGQLQKMDNNADARLADYFDVIGGTSTGGLLTAMITTPNENNRPFAAANEIVPFYFEHGPHIFNSSTGQFFGPKYDGKYLMQVLQEKLGETRVHQALTEVAISSFDIKTNKPVIFTKSNLAKSPELDAKMYDICYSTAAAPIYFPPHHFVTHTSNGATYEFNLVDGGVATVGDPALLSLSVATRLAQEDPAFSSIKSLDYKQMLLLSLGTGTNSEFDKTYTAEEAAKWGPLRWMLAIQQMTNAASSYMTDYYISTVFQARHSQNNYLRVQENALTGTTTEMDDASEANMELLVQVGETLLKKPVSKDSPETYEEALKRFAKLLSNRKKLRANKASY.

Residues 1–23 form the signal peptide; the sequence is MATTKSFLILIVMILATTSSTFA. In terms of domain architecture, PNPLA spans 32–230; it reads LSIDGGGIKG…TVGDPALLSL (199 aa). Residues 36-41 carry the GXGXXG motif; that stretch reads GGGIKG. Positions 75-79 match the GXSXG motif; the sequence is GTSTG. The active-site Nucleophile is Ser77. Residue Asn115 is glycosylated (N-linked (GlcNAc...) asparagine). Catalysis depends on Asp216, which acts as the Proton acceptor. Residues 216–218 carry the DGA/G motif; sequence DGG. Positions 322–385 form a coiled coil; that stretch reads ENALTGTTTE…NRKKLRANKA (64 aa).

The protein belongs to the patatin family. In terms of tissue distribution, tuber.

Its subcellular location is the vacuole. In terms of biological role, probable lipolytic acyl hydrolase (LAH), an activity which is thought to be involved in the response of tubers to pathogens. The protein is Patatin group J-1 of Solanum tuberosum (Potato).